A 247-amino-acid polypeptide reads, in one-letter code: Trypsin-2 (247 aa).

The N-terminal stretch at 1-15 (MNLLLILTFVAAAVA) is a signal peptide. Positions 16 to 23 (APFDDDDK) are cleaved as a propeptide — activation peptide. The Peptidase S1 domain maps to 24-244 (IVGGYICEEN…YVDWIKDTIA (221 aa)). Cystine bridges form between C30/C160, C48/C64, C171/C185, and C196/C220. The active-site Charge relay system is H63. Positions 75, 77, 80, and 85 each coordinate Ca(2+). D107 serves as the catalytic Charge relay system. Y154 is modified (sulfotyrosine). The active-site Charge relay system is S200.

This sequence belongs to the peptidase S1 family. Requires Ca(2+) as cofactor. Sulfated on tyrosine. In terms of processing, sulfation at Tyr-154 increases selectivity towards basic versus apolar residues at the P2' position of inhibitors that bind in a substrate-like fashion. Although the increase in selectivity is relatively small, it may facilitate digestion of a broader range of dietary proteins. As to expression, expressed in Paneth cells, at the base of small intestinal crypts.

It localises to the secreted. Its subcellular location is the extracellular space. The catalysed reaction is Preferential cleavage: Arg-|-Xaa, Lys-|-Xaa.. In the ileum, may be involved in defensin processing, including DEFA5. In Homo sapiens (Human), this protein is Trypsin-2 (PRSS2).